Reading from the N-terminus, the 136-residue chain is HetP-like commitment protein Alr2902 (136 aa).

A compositionally biased stretch (polar residues) spans 94-109 (KASTQDLNQSNNSDYL). The disordered stretch occupies residues 94 to 120 (KASTQDLNQSNNSDYLTTPEPDKRGNI).

The protein belongs to the HetP family. In bacterial two-hybrid assays interacts robustly with HetR and Alr3234 and weakly with itself, HetP and Asl1930.

Functionally, delays heterocyst differentiation and commitment when nitrogen is limiting. Interplay between the 4 HetP paralogs controls the timing of commitment to heterocyst formation and its duration. Epistatic analysis show that the 3 paralogs act upstream of hetP to delay commitment (asl1930, alr3234) or inhibit development (alr2902). Asl1930 and Alr3234 must also attenuate the activity of Alr2902. When only this homolog is present no heterocysts are formed, showing it inhibits development. Ectopic expression partially complements a hetP deletion. The sequence is that of HetP-like commitment protein Alr2902 from Nostoc sp. (strain PCC 7120 / SAG 25.82 / UTEX 2576).